A 136-amino-acid chain; its full sequence is MKKTGLALVLATILLGMMGSVHAQEPRVVKVPACIGLNQSQVATQVKRDFLQNRIPRWEADKKQLGTDKPVVWINVVDIIGKDDIWQVPLIARGNKGDKTYQVVLDCKSGTMTYTGLNAQTRPDPQIGLNSQAGPK.

The first 23 residues, 1-23 (MKKTGLALVLATILLGMMGSVHA), serve as a signal peptide directing secretion. The YebF/Cmi domain occupies 30 to 117 (KVPACIGLNQ…KSGTMTYTGL (88 aa)). Cys34 and Cys107 are oxidised to a cystine. Residues 117 to 136 (LNAQTRPDPQIGLNSQAGPK) form a disordered region.

This sequence belongs to the YebF family.

It localises to the secreted. This chain is Protein YebF, found in Yersinia pseudotuberculosis serotype O:1b (strain IP 31758).